Here is a 438-residue protein sequence, read N- to C-terminus: Glycogen synthase (438 aa).

Lys-16 is an ADP-alpha-D-glucose binding site.

This sequence belongs to the glycosyltransferase 1 family. Bacterial/plant glycogen synthase subfamily.

The enzyme catalyses [(1-&gt;4)-alpha-D-glucosyl](n) + ADP-alpha-D-glucose = [(1-&gt;4)-alpha-D-glucosyl](n+1) + ADP + H(+). It participates in glycan biosynthesis; glycogen biosynthesis. Its function is as follows. Synthesizes alpha-1,4-glucan chains using ADP-glucose. The protein is Glycogen synthase of Thermus caldophilus.